The sequence spans 123 residues: MATAAGATYFQRGSLFWFTVITLSFGYYTWVVFWPQSIPYQNLGPLGPFTQYLVDHHHTLLCNGYWLAWLIHVGESLYAIVLCKHKGITSGRAQLLWFLQTFFFGIASLTILIAYKRKRQKQT.

An N-acetylalanine modification is found at Ala-2. Transmembrane regions (helical) follow at residues 15 to 35, 61 to 81, and 95 to 115; these read LFWF…VFWP, LCNG…YAIV, and LLWF…LIAY.

It is found in the membrane. This Homo sapiens (Human) protein is Transmembrane protein 254 (TMEM254).